The following is a 541-amino-acid chain: Chaperonin GroEL 2 (541 aa).

ATP is bound by residues 29–32 (TLGP), 86–90 (DGTTT), glycine 413, 476–478 (NAA), and aspartate 492.

This sequence belongs to the chaperonin (HSP60) family. As to quaternary structure, forms a cylinder of 14 subunits composed of two heptameric rings stacked back-to-back. Interacts with the co-chaperonin GroES.

It localises to the secreted. It is found in the capsule. The protein localises to the cell surface. Its subcellular location is the cell wall. The enzyme catalyses ATP + H2O + a folded polypeptide = ADP + phosphate + an unfolded polypeptide.. Functionally, together with its co-chaperonin GroES, plays an essential role in assisting protein folding. The GroEL-GroES system forms a nano-cage that allows encapsulation of the non-native substrate proteins and provides a physical environment optimized to promote and accelerate protein folding. In Mycobacterium sp. (strain KMS), this protein is Chaperonin GroEL 2.